Reading from the N-terminus, the 278-residue chain is Multidrug-efflux transporter 1 regulator (278 aa).

In terms of domain architecture, HTH merR-type spans 5-75 (YYSIGEVSKL…LEEMKKAQDL (71 aa)). The segment at residues 8-27 (IGEVSKLANVSIKALRYYDK) is a DNA-binding region (H-T-H motif).

In terms of assembly, binds DNA as a homodimer.

In terms of biological role, activates transcription of the bmr gene in response to structurally dissimilar drugs. Binds rhodamine as an inducer. The chain is Multidrug-efflux transporter 1 regulator (bmrR) from Bacillus subtilis (strain 168).